Consider the following 606-residue polypeptide: NADH-ubiquinone oxidoreductase chain 5 (606 aa).

15 helical membrane-spanning segments follow: residues 1–21 (MNMF…PIIM), 43–63 (AFMI…ETIF), 87–107 (MIFV…SMWY), 117–137 (FFKY…ANNM), 140–160 (LFIG…WWYG), 171–191 (AVLY…WFLL), 201–221 (IFIT…LAAT), 241–261 (TPVS…FLLI), 273–293 (IQTL…ICAL), 310–330 (LGLM…LHIC), 365–385 (VLPF…GMPF), 409–429 (LLIT…IMFF), 457–477 (LLIG…PTTI), 488–508 (MTAL…NLTT), and 582–602 (GLIK…LLIL).

The protein belongs to the complex I subunit 5 family. As to quaternary structure, core subunit of respiratory chain NADH dehydrogenase (Complex I) which is composed of 45 different subunits.

Its subcellular location is the mitochondrion inner membrane. The enzyme catalyses a ubiquinone + NADH + 5 H(+)(in) = a ubiquinol + NAD(+) + 4 H(+)(out). In terms of biological role, core subunit of the mitochondrial membrane respiratory chain NADH dehydrogenase (Complex I) which catalyzes electron transfer from NADH through the respiratory chain, using ubiquinone as an electron acceptor. Essential for the catalytic activity and assembly of complex I. The sequence is that of NADH-ubiquinone oxidoreductase chain 5 (MT-ND5) from Canis lupus familiaris (Dog).